A 457-amino-acid chain; its full sequence is MQKYFVEARQLLALAIPVILAQVAQTAMGFVDTVMAGGYSATDMAAVAIGTSIWLPAILFGHGLLLALTPVVAQLNGSGRRDRIAQQVRQGFWLAGFVSVLIMVVLWNAGYIISSMHNIDPLLAEKAVGYLRALLWGAPGYLFFQVARNQCEGLAKTKPGMVMGFIGLLVNIPVNYIFIYGHFGMPELGGVGCGVATASVYWVMFASMLWWVRRARSMRDIRCAERFSRPDVAVLLRLVQLGLPIALALFFEVTLFAVVALLVSPLGIIDVAGHQIALNFSSLMFVLPLSLAAAVTIRVGFRLGQGSTIDAQVSARTGVGVGVCLAVFTAIFTVLMREQIALLYNDNPEVVLLASHLMLLAAIYQISDSIQVIGSGILRGYKDTRSIFFITFTAYWVLGLPSGYLLALTDMVVPRMGPAGFWCGFIIGLTSAAIMMMLRMRFLQRQPSSIILQRAAR.

12 consecutive transmembrane segments (helical) span residues 11 to 31 (LLAL…MGFV), 53 to 73 (IWLP…PVVA), 93 to 113 (WLAG…GYII), 127 to 147 (AVGY…FQVA), 160 to 180 (GMVM…IFIY), 191 to 211 (VGCG…MLWW), 243 to 263 (LPIA…ALLV), 276 to 296 (IALN…AAVT), 316 to 336 (RTGV…TVLM), 350 to 370 (VVLL…SDSI), 387 to 407 (IFFI…YLLA), and 418 to 438 (PAGF…MMML).

The protein belongs to the multi antimicrobial extrusion (MATE) (TC 2.A.66.1) family. MdtK subfamily.

The protein localises to the cell inner membrane. Multidrug efflux pump that functions probably as a Na(+)/drug antiporter. The polypeptide is Multidrug resistance protein MdtK (Klebsiella pneumoniae (strain 342)).